A 416-amino-acid polypeptide reads, in one-letter code: E3 ubiquitin-protein ligase RNFT1 (416 aa).

Residues 27 to 45 (QSSSGHTHHQPGSNDSPSV) show a composition bias toward polar residues. 2 disordered regions span residues 27 to 50 (QSSSGHTHHQPGSNDSPSVCMSLP) and 63 to 116 (GDVT…ADSR). The segment covering 77-86 (GARSSSRRVR) has biased composition (basic residues). 6 helical membrane-spanning segments follow: residues 146 to 166 (LVVQHITGISVGIGLLTTFLY), 184 to 204 (LQCLWILVFLLFSSLLLYYTF), 214 to 234 (VFMNPSLGPLHFFDALWVVGI), 237 to 257 (FIGKFFFMGLKCIILLVPSFV), 265 to 287 (YWYMALEEVAQCYCMLVSTPVWF), and 302 to 322 (WHFGILLALLYLILKLLIIFG). Positions 349–400 (CSEVDGMCAICQAEFIKPIVLVCQHVFCEECISLWFNKEKTCPLCRTVISNQ) are required for ubiquitin ligase activity and for protection against ER stress-induced cell death. Residues 356–394 (CAICQAEFIKPIVLVCQHVFCEECISLWFNKEKTCPLCR) form an RING-type zinc finger.

The protein resides in the endoplasmic reticulum membrane. The catalysed reaction is S-ubiquitinyl-[E2 ubiquitin-conjugating enzyme]-L-cysteine + [acceptor protein]-L-lysine = [E2 ubiquitin-conjugating enzyme]-L-cysteine + N(6)-ubiquitinyl-[acceptor protein]-L-lysine.. It participates in protein modification; protein ubiquitination. Its function is as follows. E3 ubiquitin-protein ligase that acts in the endoplasmic reticulum (ER)-associated degradation (ERAD) pathway, which targets misfolded proteins that accumulate in the endoplasmic reticulum (ER) for ubiquitination and subsequent proteasome-mediated degradation. Protects cells from ER stress-induced apoptosis. The protein is E3 ubiquitin-protein ligase RNFT1 (rnft1) of Xenopus tropicalis (Western clawed frog).